Reading from the N-terminus, the 347-residue chain is NADH-ubiquinone oxidoreductase chain 2 (347 aa).

11 helical membrane passes run 1 to 21 (MNPL…LITA), 25 to 45 (HWFL…PVLT), 55 to 75 (AAIK…MAIL), 96 to 116 (TMML…FWVP), 123 to 143 (TLMS…SIMY), 145 to 165 (IFPV…IMVG), 178 to 198 (ILAY…PYNP), 200 to 220 (ITIF…LALN), 237 to 257 (LTWL…LPPL), 274 to 294 (GTLI…YFYM), and 324 to 344 (FLLP…PLTF).

The protein belongs to the complex I subunit 2 family. Core subunit of respiratory chain NADH dehydrogenase (Complex I) which is composed of 45 different subunits. Interacts with TMEM242.

It localises to the mitochondrion inner membrane. It catalyses the reaction a ubiquinone + NADH + 5 H(+)(in) = a ubiquinol + NAD(+) + 4 H(+)(out). Functionally, core subunit of the mitochondrial membrane respiratory chain NADH dehydrogenase (Complex I) which catalyzes electron transfer from NADH through the respiratory chain, using ubiquinone as an electron acceptor. Essential for the catalytic activity and assembly of complex I. This chain is NADH-ubiquinone oxidoreductase chain 2, found in Hylobates lar (Lar gibbon).